The primary structure comprises 535 residues: Zinc finger protein squeeze (535 aa).

2 stretches are compositionally biased toward low complexity: residues 70–97 (MVMEQQPHPDQQQQQHLHHPQQQQHPPQ) and 131–142 (SSASGSGSNGSS). The disordered stretch occupies residues 70–157 (MVMEQQPHPD…RRGDGDQAKP (88 aa)). A compositionally biased stretch (basic and acidic residues) spans 145 to 156 (EESRRGDGDQAK). C2H2-type zinc fingers lie at residues 158 to 180 (YKCGSCSKSFANSSYLSQHTRIH), 186 to 208 (YRCEICQRKFTQLSHLQQHIRTH), 214 to 238 (YKCRHAGCPKAFSQLSNLQSHSRCH), 244 to 266 (FKCNSCYKCFSDEMTLLEHIPKH), and 275 to 297 (HICNLCGKSYTQETYLQKHLQKH). Phosphothreonine is present on T395. Phosphoserine is present on residues S399 and S401. Residues 417 to 475 (TPQHHLQQQQQQQQQQQAQQQQQAQHQPSPGPGNSAFTPLSATVAPPPHLQQHRGPPGS) are disordered. Residues 419–443 (QHHLQQQQQQQQQQQAQQQQQAQHQ) are compositionally biased toward low complexity. The residue at position 475 (S475) is a Phosphoserine. A phosphotyrosine mark is found at Y479 and Y481.

This sequence belongs to the krueppel C2H2-type zinc-finger protein family. As to quaternary structure, interacts with nab; which acts as a coactivator. Interacts with ap. In terms of tissue distribution, largely restricted to subsets of cells in the CNS throughout embryonic and first instar larval (L1) development. Expressed in a population of lateral interneurons, primarily projecting axons in the anterior and posterior commissures. Overlaps with ap within the thoracic ap cluster. By stage 17, it is restricted to 2 neurons within the ap-cluster, with one neuron typically continuing to display higher levels of expression. Selectively expressed at higher levels within the FMRFa Tv neurons. Expressed in all leucokinergic cells.

It is found in the nucleus. Functionally, transcription factor involved in neuronal fate specification. First required in embryonic CNS development to define the number of cells that express apterous (ap) in the ap thoracic cluster of interneurons. Later on, it plays a central role in the combinatorial code of transcription factors that specifies the fate of the Tv neuron in the ap cluster by participating in the transcription regulation of FMRFa in Tv cells. Also required for projection neuron dendritic targeting. The polypeptide is Zinc finger protein squeeze (sqz) (Drosophila melanogaster (Fruit fly)).